Here is a 572-residue protein sequence, read N- to C-terminus: Urease subunit alpha (572 aa).

One can recognise a Urease domain in the interval 134-572 (GGIDSHIHFI…LPLTQRYFLF (439 aa)). 3 residues coordinate Ni(2+): histidine 139, histidine 141, and lysine 222. The residue at position 222 (lysine 222) is an N6-carboxylysine. Histidine 224 lines the substrate pocket. Ni(2+) contacts are provided by histidine 251 and histidine 277. Histidine 325 serves as the catalytic Proton donor. Aspartate 365 is a Ni(2+) binding site.

This sequence belongs to the metallo-dependent hydrolases superfamily. Urease alpha subunit family. In terms of assembly, heterotrimer of UreA (gamma), UreB (beta) and UreC (alpha) subunits. Three heterotrimers associate to form the active enzyme. It depends on Ni cation as a cofactor. Post-translationally, carboxylation allows a single lysine to coordinate two nickel ions.

Its subcellular location is the cytoplasm. The catalysed reaction is urea + 2 H2O + H(+) = hydrogencarbonate + 2 NH4(+). The protein operates within nitrogen metabolism; urea degradation; CO(2) and NH(3) from urea (urease route): step 1/1. This chain is Urease subunit alpha, found in Variovorax paradoxus (strain S110).